A 196-amino-acid polypeptide reads, in one-letter code: Carnitine operon protein CaiE (196 aa).

Positions 177–196 (RQMEENRPRLQGTTDVMPKR) are disordered.

This sequence belongs to the transferase hexapeptide repeat family.

It functions in the pathway amine and polyamine metabolism; carnitine metabolism. Its function is as follows. Overproduction of CaiE stimulates the activity of CaiB and CaiD. The sequence is that of Carnitine operon protein CaiE from Escherichia coli O17:K52:H18 (strain UMN026 / ExPEC).